Here is a 739-residue protein sequence, read N- to C-terminus: tRNA 5-methylaminomethyl-2-thiouridine biosynthesis bifunctional protein MnmC (739 aa).

A tRNA (mnm(5)s(2)U34)-methyltransferase region spans residues 1 to 282 (MDKVTPAKLS…KREMLTATKL (282 aa)). The interval 330 to 739 (IGAGVCGLMA…HRSSLKKPLS (410 aa)) is FAD-dependent cmnm(5)s(2)U34 oxidoreductase.

In the N-terminal section; belongs to the methyltransferase superfamily. tRNA (mnm(5)s(2)U34)-methyltransferase family. It in the C-terminal section; belongs to the DAO family. FAD is required as a cofactor.

It localises to the cytoplasm. It carries out the reaction 5-aminomethyl-2-thiouridine(34) in tRNA + S-adenosyl-L-methionine = 5-methylaminomethyl-2-thiouridine(34) in tRNA + S-adenosyl-L-homocysteine + H(+). Catalyzes the last two steps in the biosynthesis of 5-methylaminomethyl-2-thiouridine (mnm(5)s(2)U) at the wobble position (U34) in tRNA. Catalyzes the FAD-dependent demodification of cmnm(5)s(2)U34 to nm(5)s(2)U34, followed by the transfer of a methyl group from S-adenosyl-L-methionine to nm(5)s(2)U34, to form mnm(5)s(2)U34. The sequence is that of tRNA 5-methylaminomethyl-2-thiouridine biosynthesis bifunctional protein MnmC from Psychrobacter sp. (strain PRwf-1).